Consider the following 143-residue polypeptide: Large ribosomal subunit protein uL13 (143 aa).

Belongs to the universal ribosomal protein uL13 family. As to quaternary structure, part of the 50S ribosomal subunit.

This protein is one of the early assembly proteins of the 50S ribosomal subunit, although it is not seen to bind rRNA by itself. It is important during the early stages of 50S assembly. This chain is Large ribosomal subunit protein uL13, found in Chloroflexus aggregans (strain MD-66 / DSM 9485).